Reading from the N-terminus, the 218-residue chain is N-(5'-phosphoribosyl)anthranilate isomerase (218 aa).

Belongs to the TrpF family.

The catalysed reaction is N-(5-phospho-beta-D-ribosyl)anthranilate = 1-(2-carboxyphenylamino)-1-deoxy-D-ribulose 5-phosphate. The protein operates within amino-acid biosynthesis; L-tryptophan biosynthesis; L-tryptophan from chorismate: step 3/5. The chain is N-(5'-phosphoribosyl)anthranilate isomerase from Halalkalibacterium halodurans (strain ATCC BAA-125 / DSM 18197 / FERM 7344 / JCM 9153 / C-125) (Bacillus halodurans).